We begin with the raw amino-acid sequence, 74 residues long: MASSGVTVSAAGSASEASEVPDNVGDWLRGVFRFATDRNDFRRNLILNLGLFAAGVWLARNLSDIDLMAPQPGV.

The span at 1 to 20 (MASSGVTVSAAGSASEASEV) shows a compositional bias: low complexity. The tract at residues 1 to 21 (MASSGVTVSAAGSASEASEVP) is disordered. Position 2 is an N-acetylalanine (alanine 2).

The protein belongs to the Tom6 family. Forms part of the preprotein translocase complex of the outer mitochondrial membrane (TOM complex) which consists of at least 7 different proteins (TOMM5, TOMM6, TOMM7, TOMM20, TOMM22, TOMM40 and TOMM70).

The protein localises to the mitochondrion outer membrane. The polypeptide is Mitochondrial import receptor subunit TOM6 homolog (Tomm6) (Mus musculus (Mouse)).